A 156-amino-acid chain; its full sequence is ATP synthase subunit b 2 (156 aa).

Residues S6–W26 traverse the membrane as a helical segment.

It belongs to the ATPase B chain family. As to quaternary structure, F-type ATPases have 2 components, F(1) - the catalytic core - and F(0) - the membrane proton channel. F(1) has five subunits: alpha(3), beta(3), gamma(1), delta(1), epsilon(1). F(0) has three main subunits: a(1), b(2) and c(10-14). The alpha and beta chains form an alternating ring which encloses part of the gamma chain. F(1) is attached to F(0) by a central stalk formed by the gamma and epsilon chains, while a peripheral stalk is formed by the delta and b chains.

It localises to the cell inner membrane. Its function is as follows. F(1)F(0) ATP synthase produces ATP from ADP in the presence of a proton or sodium gradient. F-type ATPases consist of two structural domains, F(1) containing the extramembraneous catalytic core and F(0) containing the membrane proton channel, linked together by a central stalk and a peripheral stalk. During catalysis, ATP synthesis in the catalytic domain of F(1) is coupled via a rotary mechanism of the central stalk subunits to proton translocation. Functionally, component of the F(0) channel, it forms part of the peripheral stalk, linking F(1) to F(0). The protein is ATP synthase subunit b 2 of Vibrio campbellii (strain ATCC BAA-1116).